Consider the following 1040-residue polypeptide: Neprilysin-4 (1040 aa).

The segment at 1–27 (MSRHSQLKLAMPSVHGAPATAPGSPMN) is disordered. The required for maintaining muscle integrity stretch occupies residues 1–45 (MSRHSQLKLAMPSVHGAPATAPGSPMNAKARSVKLGLGVNQRTGR). At 1 to 55 (MSRHSQLKLAMPSVHGAPATAPGSPMNAKARSVKLGLGVNQRTGRVQWCPGLTCC) the chain is on the cytoplasmic side. Residues 56–76 (KMLLLLPVVMLPLTLVLILIM) traverse the membrane as a helical; Signal-anchor for type II membrane protein segment. The Extracellular portion of the chain corresponds to 77-1040 (RLDGMLAALQ…MNPQKKCSVW (964 aa)). In terms of domain architecture, Peptidase M13 spans 251-1040 (EEGTREGIRM…MNPQKKCSVW (790 aa)). Intrachain disulfides connect Cys-277–Cys-1025, Cys-285–Cys-985, Cys-452–Cys-700, and Cys-909–Cys-1037. Residues Asn-387, Asn-593, Asn-723, and Asn-819 are each glycosylated (N-linked (GlcNAc...) asparagine). Residue His-872 coordinates Zn(2+). The active site involves Glu-873. Residue His-876 participates in Zn(2+) binding. Asn-916 is a glycosylation site (N-linked (GlcNAc...) asparagine). Glu-934 lines the Zn(2+) pocket. Asp-938 functions as the Proton donor in the catalytic mechanism. Asn-969 carries N-linked (GlcNAc...) asparagine glycosylation.

It belongs to the peptidase M13 family. In terms of assembly, interacts (via intracellular domain) with the putative carbohydrate kinase CG3534. Zn(2+) serves as cofactor. As to expression, expressed in the gonads and testes of adults, and the adult and larval brain (at protein level). In embryos, expressed in the pericardial, muscle founder and glia cells (at protein level). In stage 12 embryos, expressed in specific dorsal muscle founder cells such as DA1 and DO2, and also in the certain pericardial progenitor cells where expression persists throughout embryogenesis. Expressed in the glia cells of the embryonic, larval and adult central nervous system. Expressed in the somatic muscles of larvae, pupae and adults. Isoform A: Detected in the male abdomen (at protein level). Isoform B: Not detected in the male or female abdomen (at protein level).

Its subcellular location is the cell membrane. The protein localises to the sarcoplasmic reticulum. It is found in the cytoplasm. It carries out the reaction Preferential cleavage of polypeptides between hydrophobic residues, particularly with Phe or Tyr at P1'.. Metalloendoprotease which cleaves peptides at the amino side of hydrophobic residues - such as the hormones Akh and Dh31, and the neuropeptides Allatostatins (AST1, AST2, AST3 and AST4), Crz, Drosulfakinins (DSK-I and DSK-II), Lk, sNPF and the tachykinin peptides TK-1, TK-2, TK-4 and TK-5. Functions in female fertility, memory formation and may also act in regulating insulin signaling and food intake. Likely to be involved in controlling feeding behavior and the expression of insulin-like peptides by cleaving various regulatory peptides that include certain Drosulfakinins, Allatostatins and tachykinin peptides. Required in females for normal patterns of egg laying and hatching. Required in the dorsal paired medial neurons for the proper formation of long-term (LTM) and middle-term memories (MTM). Also required in the mushroom body neurons where it functions redundantly with neprilysins Nep2 and Nep3, in normal LTM formation. Functionally, cleaves angiotensin-1 and tachykinin neuropeptide substance P. Functions in maintaining muscle integrity, possibly independently of its endopeptidase activity. The polypeptide is Neprilysin-4 (Drosophila melanogaster (Fruit fly)).